The chain runs to 254 residues: Pimeloyl-[acyl-carrier protein] methyl ester esterase (254 aa).

An AB hydrolase-1 domain is found at 16–242; it reads LVLIHGWGMN…ASHAPFISHP (227 aa). Substrate contacts are provided by residues tryptophan 22, 82–83, and 143–147; these read SL and FLALQ. Residue serine 82 is the Nucleophile of the active site. Active-site residues include aspartate 207 and histidine 235. Histidine 235 lines the substrate pocket.

Belongs to the AB hydrolase superfamily. Carboxylesterase BioH family. As to quaternary structure, monomer.

The protein resides in the cytoplasm. The catalysed reaction is 6-carboxyhexanoyl-[ACP] methyl ester + H2O = 6-carboxyhexanoyl-[ACP] + methanol + H(+). The protein operates within cofactor biosynthesis; biotin biosynthesis. The physiological role of BioH is to remove the methyl group introduced by BioC when the pimeloyl moiety is complete. It allows to synthesize pimeloyl-ACP via the fatty acid synthetic pathway through the hydrolysis of the ester bonds of pimeloyl-ACP esters. The chain is Pimeloyl-[acyl-carrier protein] methyl ester esterase from Photobacterium profundum (strain SS9).